The primary structure comprises 263 residues: Shikimate dehydrogenase (NADP(+)) (263 aa).

Shikimate contacts are provided by residues 16–18 and Thr65; that span reads SKS. Residue Lys69 is the Proton acceptor of the active site. Shikimate is bound by residues Asn90 and Asp105. Residues 125 to 129, Ser181, and Leu208 contribute to the NADP(+) site; that span reads GAGGS. Position 210 (Tyr210) interacts with shikimate. Gly230 is an NADP(+) binding site. Gln237 is a shikimate binding site.

Belongs to the shikimate dehydrogenase family. In terms of assembly, homodimer.

The catalysed reaction is shikimate + NADP(+) = 3-dehydroshikimate + NADPH + H(+). The protein operates within metabolic intermediate biosynthesis; chorismate biosynthesis; chorismate from D-erythrose 4-phosphate and phosphoenolpyruvate: step 4/7. Functionally, involved in the biosynthesis of the chorismate, which leads to the biosynthesis of aromatic amino acids. Catalyzes the reversible NADPH linked reduction of 3-dehydroshikimate (DHSA) to yield shikimate (SA). This chain is Shikimate dehydrogenase (NADP(+)), found in Helicobacter pylori (strain ATCC 700392 / 26695) (Campylobacter pylori).